A 225-amino-acid chain; its full sequence is Sirohydrochlorin ferrochelatase, chloroplastic (225 aa).

A chloroplast-targeting transit peptide spans 1 to 46 (MTTQSQFLVNLSYGGLASQSNLRANNRVSPSSCQITRTNRSWALPV). Residues histidine 89 and histidine 155 each contribute to the Fe cation site. 4 residues coordinate [4Fe-4S] cluster: cysteine 199, cysteine 210, cysteine 213, and cysteine 219.

The protein belongs to the CbiX family. SirB subfamily. As to quaternary structure, homodimer. The cofactor is [4Fe-4S] cluster.

It localises to the plastid. The protein localises to the chloroplast. The enzyme catalyses siroheme + 2 H(+) = sirohydrochlorin + Fe(2+). Its pathway is porphyrin-containing compound metabolism; siroheme biosynthesis; siroheme from sirohydrochlorin: step 1/1. Chelates iron to the siroheme precursor. Catalyzes the last step of the siroheme biosynthesis. Unlike its counterparts in bacteria, contains an [Fe-S] cluster which is not involved directly in the enzymatic reaction, but may play regulatory role in iron, sulfur and tetrapyrrole metabolism. The [Fe-S] cluster is required for normal plant growth. The chain is Sirohydrochlorin ferrochelatase, chloroplastic from Arabidopsis thaliana (Mouse-ear cress).